We begin with the raw amino-acid sequence, 86 residues long: Translation initiation factor IF-1 2 (86 aa).

The S1-like domain maps to 1–72 (MAKEELLEME…SKGRITFRHI (72 aa)).

The protein belongs to the IF-1 family. As to quaternary structure, component of the 30S ribosomal translation pre-initiation complex which assembles on the 30S ribosome in the order IF-2 and IF-3, IF-1 and N-formylmethionyl-tRNA(fMet); mRNA recruitment can occur at any time during PIC assembly.

The protein resides in the cytoplasm. In terms of biological role, one of the essential components for the initiation of protein synthesis. Stabilizes the binding of IF-2 and IF-3 on the 30S subunit to which N-formylmethionyl-tRNA(fMet) subsequently binds. Helps modulate mRNA selection, yielding the 30S pre-initiation complex (PIC). Upon addition of the 50S ribosomal subunit IF-1, IF-2 and IF-3 are released leaving the mature 70S translation initiation complex. The protein is Translation initiation factor IF-1 2 of Polynucleobacter asymbioticus (strain DSM 18221 / CIP 109841 / QLW-P1DMWA-1) (Polynucleobacter necessarius subsp. asymbioticus).